Here is a 95-residue protein sequence, read N- to C-terminus: Putative defensin-like protein 252 (95 aa).

The signal sequence occupies residues 1–27 (MRCVTSFVVLCILMFLVVNNVKVDVKA). 4 disulfide bridges follow: cysteine 34/cysteine 93, cysteine 45/cysteine 72, cysteine 56/cysteine 85, and cysteine 70/cysteine 87.

It belongs to the DEFL family.

The protein resides in the secreted. This Arabidopsis thaliana (Mouse-ear cress) protein is Putative defensin-like protein 252 (SCRL13).